Here is a 388-residue protein sequence, read N- to C-terminus: Succinate--CoA ligase [ADP-forming] subunit beta (388 aa).

The ATP-grasp domain maps to 9-244 (KGVLSSFGVT…PDEYAAEELE (236 aa)). Residues Lys-46, 53–55 (GRG), Glu-99, Val-102, and Glu-107 contribute to the ATP site. The Mg(2+) site is built by Asn-199 and Asp-213. Substrate is bound by residues Asn-264 and 320–322 (GIM).

It belongs to the succinate/malate CoA ligase beta subunit family. In terms of assembly, heterotetramer of two alpha and two beta subunits. Mg(2+) serves as cofactor.

The enzyme catalyses succinate + ATP + CoA = succinyl-CoA + ADP + phosphate. It carries out the reaction GTP + succinate + CoA = succinyl-CoA + GDP + phosphate. It functions in the pathway carbohydrate metabolism; tricarboxylic acid cycle; succinate from succinyl-CoA (ligase route): step 1/1. Succinyl-CoA synthetase functions in the citric acid cycle (TCA), coupling the hydrolysis of succinyl-CoA to the synthesis of either ATP or GTP and thus represents the only step of substrate-level phosphorylation in the TCA. The beta subunit provides nucleotide specificity of the enzyme and binds the substrate succinate, while the binding sites for coenzyme A and phosphate are found in the alpha subunit. The sequence is that of Succinate--CoA ligase [ADP-forming] subunit beta from Anaplasma marginale (strain St. Maries).